The sequence spans 385 residues: MTDREQFFRDVNKIVIKIGTSSITRKGCDHTKENCNIDPAFMESIAAQVYELRKHGKEVILVSSGAIGVGLNELGIAPKPREIPIRQAAAAVGQSILMQDWSRAFSKYGMKVAQILLTYEFYSDRVTYLNLRNSISTLLEYEVVPIINENDCTCTNEIEAIFGDNDKLSAMVASKIDADLLIILSDIDGLFDRNPKTHSDAKLLTLIKKITPEIESYGGDPTNFKGVGGMRTKIKAAKICSMAGCYVVIANSEIEDVVTKILSGEEIGTLFLAERHIQKNRARWIILARASGTVRVDAGAKAAVLGKNSLLPAGIVDIEGTFDRGDVVKLECEGKVFAKGITNYTSKELIKIKGAQTNQIDNILGYNNYDNVIKKENIGILEGIN.

K17 lines the ATP pocket. Substrate is bound by residues S64, D151, and N165. An ATP-binding site is contributed by S185–D186. A PUA domain is found at S291–N367.

The protein belongs to the glutamate 5-kinase family.

Its subcellular location is the cytoplasm. The enzyme catalyses L-glutamate + ATP = L-glutamyl 5-phosphate + ADP. It participates in amino-acid biosynthesis; L-proline biosynthesis; L-glutamate 5-semialdehyde from L-glutamate: step 1/2. Functionally, catalyzes the transfer of a phosphate group to glutamate to form L-glutamate 5-phosphate. This chain is Glutamate 5-kinase, found in Methanosarcina acetivorans (strain ATCC 35395 / DSM 2834 / JCM 12185 / C2A).